A 668-amino-acid polypeptide reads, in one-letter code: Probable 6-phosphofructo-2-kinase PB17E12.14c (668 aa).

Basic and acidic residues predominate over residues 1–14 (MSNNNNKDDSELQS). 2 disordered regions span residues 1–105 (MSNN…GSRP) and 136–185 (HRVP…EATN). 3 stretches are compositionally biased toward polar residues: residues 46–56 (NDHSFTNTDSV), 65–86 (SPVS…QNSP), and 164–184 (SSMS…SEAT). 197–204 (GLPARGKS) serves as a coordination point for ATP. Catalysis depends on residues aspartate 281 and cysteine 312. Arginine 346 contributes to the beta-D-fructose 6-phosphate binding site. Glutamate 540 is an active-site residue. Histidine 608 serves as the catalytic Proton donor.

It catalyses the reaction beta-D-fructose 6-phosphate + ATP = beta-D-fructose 2,6-bisphosphate + ADP + H(+). Functionally, synthesis of fructose 2,6-bisphosphate. The protein is Probable 6-phosphofructo-2-kinase PB17E12.14c of Schizosaccharomyces pombe (strain 972 / ATCC 24843) (Fission yeast).